We begin with the raw amino-acid sequence, 290 residues long: Phosphate import ATP-binding protein PstB (290 aa).

One can recognise an ABC transporter domain in the interval 43–285 (MSVRNLNVYY…PEHELTEAYI (243 aa)). An ATP-binding site is contributed by 75–82 (GPSGCGKS).

This sequence belongs to the ABC transporter superfamily. Phosphate importer (TC 3.A.1.7) family. In terms of assembly, the complex is composed of two ATP-binding proteins (PstB), two transmembrane proteins (PstC and PstA) and a solute-binding protein (PstS).

It is found in the cell inner membrane. It carries out the reaction phosphate(out) + ATP + H2O = ADP + 2 phosphate(in) + H(+). Its function is as follows. Part of the ABC transporter complex PstSACB involved in phosphate import. Responsible for energy coupling to the transport system. The sequence is that of Phosphate import ATP-binding protein PstB from Pseudoalteromonas atlantica (strain T6c / ATCC BAA-1087).